The chain runs to 187 residues: Large ribosomal subunit protein uL22B (187 aa).

Belongs to the universal ribosomal protein uL22 family. Component of the large ribosomal subunit (LSU). Mature yeast ribosomes consist of a small (40S) and a large (60S) subunit. The 40S small subunit contains 1 molecule of ribosomal RNA (18S rRNA) and at least 33 different proteins. The large 60S subunit contains 3 rRNA molecules (25S, 5.8S and 5S rRNA) and at least 46 different proteins. uL22 is associated with the polypeptide exit tunnel.

The protein resides in the cytoplasm. Its function is as follows. Component of the ribosome, a large ribonucleoprotein complex responsible for the synthesis of proteins in the cell. The small ribosomal subunit (SSU) binds messenger RNAs (mRNAs) and translates the encoded message by selecting cognate aminoacyl-transfer RNA (tRNA) molecules. The large subunit (LSU) contains the ribosomal catalytic site termed the peptidyl transferase center (PTC), which catalyzes the formation of peptide bonds, thereby polymerizing the amino acids delivered by tRNAs into a polypeptide chain. The nascent polypeptides leave the ribosome through a tunnel in the LSU and interact with protein factors that function in enzymatic processing, targeting, and the membrane insertion of nascent chains at the exit of the ribosomal tunnel. The chain is Large ribosomal subunit protein uL22B (rpl1702) from Schizosaccharomyces pombe (strain 972 / ATCC 24843) (Fission yeast).